A 458-amino-acid polypeptide reads, in one-letter code: Sugar transporter ERD6-like 10 (458 aa).

12 consecutive transmembrane segments (helical) span residues 17–37 (ITACVILSTFVAVCSSFSYGC), 66–86 (FLNLGGAVGALFSGQLAVILG), 96–116 (LFCIFGWLSIAFAKNVLWLDL), 119–139 (ISLGIGVGLTSYVVPVYIAEI), 150–170 (ASTLLLQNSGISLIYFFGTVI), 174–194 (VLAVIGALPCFIPVIGIYFIP), 257–277 (LVVGIGLMLIQQLSGASGITY), 292–312 (LGSMIFGVFVIPKALVGLILV), 319–339 (PLLLASAVGMSIGSLLIGVSF), 350–370 (FIPVFVFINILVYFGFFAIGI), 393–413 (IVALTSWTTGWFVSYGFNFMF), and 419–439 (GTFYIFAMVGGLSLLFIWMLV).

This sequence belongs to the major facilitator superfamily. Sugar transporter (TC 2.A.1.1) family.

It is found in the membrane. In terms of biological role, sugar transporter. The polypeptide is Sugar transporter ERD6-like 10 (Arabidopsis thaliana (Mouse-ear cress)).